Consider the following 118-residue polypeptide: Large ribosomal subunit protein uL18 (118 aa).

The protein belongs to the universal ribosomal protein uL18 family. As to quaternary structure, part of the 50S ribosomal subunit; part of the 5S rRNA/L5/L18/L25 subcomplex. Contacts the 5S and 23S rRNAs.

This is one of the proteins that bind and probably mediate the attachment of the 5S RNA into the large ribosomal subunit, where it forms part of the central protuberance. The polypeptide is Large ribosomal subunit protein uL18 (Rickettsia peacockii (strain Rustic)).